The chain runs to 401 residues: Phosphoglycerate kinase (401 aa).

Substrate-binding positions include 21–23 (DLN), R36, 59–62 (HQGR), R116, and R156. ATP contacts are provided by residues E331 and 357 to 360 (GGDT).

It belongs to the phosphoglycerate kinase family.

It is found in the cytoplasm. It catalyses the reaction (2R)-3-phosphoglycerate + ATP = (2R)-3-phospho-glyceroyl phosphate + ADP. It functions in the pathway carbohydrate degradation; glycolysis; pyruvate from D-glyceraldehyde 3-phosphate: step 2/5. This is Phosphoglycerate kinase (pgk) from Haloarcula vallismortis (Halobacterium vallismortis).